Here is a 299-residue protein sequence, read N- to C-terminus: Bifunctional protein FolD 1 (299 aa).

NADP(+) is bound by residues 168–170 (GRS), serine 193, and isoleucine 234.

Belongs to the tetrahydrofolate dehydrogenase/cyclohydrolase family. In terms of assembly, homodimer.

The enzyme catalyses (6R)-5,10-methylene-5,6,7,8-tetrahydrofolate + NADP(+) = (6R)-5,10-methenyltetrahydrofolate + NADPH. It catalyses the reaction (6R)-5,10-methenyltetrahydrofolate + H2O = (6R)-10-formyltetrahydrofolate + H(+). It participates in one-carbon metabolism; tetrahydrofolate interconversion. Catalyzes the oxidation of 5,10-methylenetetrahydrofolate to 5,10-methenyltetrahydrofolate and then the hydrolysis of 5,10-methenyltetrahydrofolate to 10-formyltetrahydrofolate. The polypeptide is Bifunctional protein FolD 1 (Rhizobium etli (strain ATCC 51251 / DSM 11541 / JCM 21823 / NBRC 15573 / CFN 42)).